The following is a 481-amino-acid chain: Sialic acid-binding Ig-like lectin 16 (481 aa).

The N-terminal stretch at 1–16 is a signal peptide; sequence MLLLPLLLPVLGAGSL. Residues 17-434 lie on the Extracellular side of the membrane; that stretch reads NKDPSYSLQV…VHCKSGPMTG (418 aa). One can recognise an Ig-like V-type domain in the interval 19-122; sequence DPSYSLQVQR…DEAWYFFRVE (104 aa). 4 cysteine pairs are disulfide-bonded: cysteine 37–cysteine 174, cysteine 42–cysteine 102, cysteine 165–cysteine 216, and cysteine 259–cysteine 306. 2 N-linked (GlcNAc...) asparagine glycosylation sites follow: asparagine 43 and asparagine 78. Arginine 120 contacts N-acetylneuraminate. 3 Ig-like C2-type domains span residues 147–232, 238–322, and 327–424; these read PDVY…RTVR, LELQ…LDLS, and PENL…LSFS. Asparagine 338 and asparagine 347 each carry an N-linked (GlcNAc...) asparagine glycan. Cysteines 363 and 408 form a disulfide. A helical transmembrane segment spans residues 435–455; sequence VVLVAVGEVAMKILLLCLCLI. Over 456-481 the chain is Cytoplasmic; that stretch reads LLRVRSCRRKAARAALGMEAADAVTD.

Belongs to the immunoglobulin superfamily. SIGLEC (sialic acid binding Ig-like lectin) family. In terms of tissue distribution, expressed in bone marrow, fetal brain, fetal liver, lung and salivary gland. Detected in brain, macrophage, cancerous esophagus and lung at protein level.

It localises to the membrane. In terms of biological role, putative adhesion molecule that mediates sialic-acid dependent binding to cells. This Homo sapiens (Human) protein is Sialic acid-binding Ig-like lectin 16 (SIGLEC16).